Consider the following 98-residue polypeptide: VQ motif-containing protein 1 (98 aa).

The short motif at 27 to 36 is the VQ element; it reads FKTIVQELTG.

In terms of assembly, interacts with WRKY33.

The protein resides in the nucleus. Its function is as follows. May modulate WRKY transcription factor activities. The polypeptide is VQ motif-containing protein 1 (Arabidopsis thaliana (Mouse-ear cress)).